A 79-amino-acid chain; its full sequence is MILDYINSRIKILWYTDPFLISREGVIVLETEKTFLIKLEEKNKFIRIFKAHGIFEITFKGKSFIIAGYKLVRKPWKRI.

It belongs to the eukaryotic/archaeal RNase P protein component 1 family. Consists of a catalytic RNA component and at least 4-5 protein subunits.

The protein localises to the cytoplasm. The catalysed reaction is Endonucleolytic cleavage of RNA, removing 5'-extranucleotides from tRNA precursor.. In terms of biological role, part of ribonuclease P, a protein complex that generates mature tRNA molecules by cleaving their 5'-ends. The protein is Ribonuclease P protein component 1 of Saccharolobus solfataricus (strain ATCC 35092 / DSM 1617 / JCM 11322 / P2) (Sulfolobus solfataricus).